Consider the following 574-residue polypeptide: Acyloxyacyl hydrolase (574 aa).

The N-terminal stretch at 1–22 is a signal peptide; the sequence is MKFPWKVFKTTLLLLLLSHSLA. Positions 23 to 33 are excised as a propeptide; sequence SVPSEDQPGDS. A Saposin B-type domain is found at 36 to 117; sequence HGQSCLGCVV…YALEFCKRGA (82 aa). Residues 37–69 are important for enzyme activity, localization to cytoplasmic vesicles, and protein stability; the sequence is GQSCLGCVVLVSVIEQLAEVHNSSVQVAMERLC. Cystine bridges form between Cys-40/Cys-113, Cys-43/Cys-107, Cys-69/Cys-82, Cys-122/Cys-452, Cys-159/Cys-168, Cys-205/Cys-229, Cys-248/Cys-328, and Cys-375/Cys-458. Residue Asn-58 is glycosylated (N-linked (GlcNAc...) asparagine). Residues 172-176 form a lipopolysaccharide binding region; the sequence is ELSIK. Residues Asp-183, Asp-185, Asp-187, His-189, Asp-204, Asn-206, Asp-207, Asp-209, Val-212, Asp-222, Asp-226, Asn-228, Asn-230, Ile-232, and Glu-244 each contribute to the Ca(2+) site. Residue Asn-206 is glycosylated (N-linked (GlcNAc...) asparagine). The active site involves Ser-262. 2 N-linked (GlcNAc...) asparagine glycosylation sites follow: Asn-408 and Asn-465.

In terms of assembly, heterodimer of the large and small subunits; disulfide-linked. Ca(2+) serves as cofactor. In terms of processing, cleaved into a large and a small subunit. The small subunit is N-glycosylated. In terms of tissue distribution, detected in peritoneal macrophages (at protein level). Strongly expressed in kidney cortex, where it may be produced by proximal tubule cells. In liver, expressed at high levels in Kupffer cells. Expressed by dendritic cells. Detected at low levels in alveolar macrophages.

The protein localises to the secreted. The protein resides in the cytoplasmic vesicle. It catalyses the reaction a 3-(acyloxy)acyl derivative of bacterial toxin + H2O = a 3-hydroxyacyl derivative of bacterial toxin + a fatty acid + H(+). Its function is as follows. Removes the secondary (acyloxyacyl-linked) fatty acyl chains from the lipid A region of bacterial lipopolysaccharides (LPS). By breaking down LPS, terminates the host response to bacterial infection and prevents prolonged and damaging inflammatory responses. In peritoneal macrophages, seems to be important for recovery from a state of immune tolerance following infection by Gram-negative bacteria. This chain is Acyloxyacyl hydrolase, found in Mus musculus (Mouse).